The following is a 214-amino-acid chain: Protein FAM167A (214 aa).

2 disordered regions span residues 1–26 (MSVPQIHVEEVGAEEGAGAAAPPDDH) and 59–108 (PFPR…LSTG). The stretch at 118–156 (EAIAWLRKELTEMRLQDQQLARQLMRLRGDINKLKIEHT) forms a coiled coil.

Belongs to the FAM167 (SEC) family. Expressed in skin, including primary keratinocytes, spleen, kidney, leukocytes, testis, lung, small intestine and prostate.

The sequence is that of Protein FAM167A (FAM167A) from Homo sapiens (Human).